A 473-amino-acid chain; its full sequence is Laccase-3 (473 aa).

An N-terminal signal peptide occupies residues 1–21 (MSFSSLRRALVFLGACSSALA). Plastocyanin-like domains follow at residues 23-148 (IGPV…LVIY) and 160-298 (VDDE…ILRY). An N-linked (GlcNAc...) asparagine glycan is attached at asparagine 75. Cu cation contacts are provided by histidine 85, histidine 87, histidine 130, and histidine 132. 2 cysteine pairs are disulfide-bonded: cysteine 106–cysteine 462 and cysteine 138–cysteine 221. N-linked (GlcNAc...) asparagine glycans are attached at residues asparagine 226, asparagine 283, asparagine 309, asparagine 346, asparagine 350, and asparagine 374. One can recognise a Plastocyanin-like 3 domain in the interval 365-444 (TVPVLLQILN…AGLAIVFAED (80 aa)). The Cu cation site is built by histidine 410, histidine 413, histidine 415, histidine 426, cysteine 427, histidine 428, and histidine 432. N-linked (GlcNAc...) asparagine glycosylation is present at asparagine 470.

Belongs to the multicopper oxidase family. As to quaternary structure, homodimer. Requires Cu cation as cofactor.

The protein resides in the secreted. The catalysed reaction is 4 hydroquinone + O2 = 4 benzosemiquinone + 2 H2O. Lignin degradation and detoxification of lignin-derived products. The sequence is that of Laccase-3 (LCC3) from Trametes villosa (White-rot fungus).